A 211-amino-acid polypeptide reads, in one-letter code: ATP phosphoribosyltransferase (211 aa).

Belongs to the ATP phosphoribosyltransferase family. Short subfamily. Heteromultimer composed of HisG and HisZ subunits.

The protein resides in the cytoplasm. It carries out the reaction 1-(5-phospho-beta-D-ribosyl)-ATP + diphosphate = 5-phospho-alpha-D-ribose 1-diphosphate + ATP. It functions in the pathway amino-acid biosynthesis; L-histidine biosynthesis; L-histidine from 5-phospho-alpha-D-ribose 1-diphosphate: step 1/9. Catalyzes the condensation of ATP and 5-phosphoribose 1-diphosphate to form N'-(5'-phosphoribosyl)-ATP (PR-ATP). Has a crucial role in the pathway because the rate of histidine biosynthesis seems to be controlled primarily by regulation of HisG enzymatic activity. This is ATP phosphoribosyltransferase from Bacillus thuringiensis subsp. konkukian (strain 97-27).